Reading from the N-terminus, the 643-residue chain is Carboxy-terminal kinesin 2 (643 aa).

2 disordered regions span residues M1 to E42 and M81 to V101. The interval M1–K116 is globular. The segment covering P88–V101 has biased composition (polar residues). A coiled-coil region spans residues K117–R296. One can recognise a Kinesin motor domain in the interval N294–C633. Residue G386–T393 participates in ATP binding.

The protein belongs to the TRAFAC class myosin-kinesin ATPase superfamily. Kinesin family. NCD subfamily.

The protein localises to the cytoplasm. The protein resides in the cytoskeleton. Its function is as follows. Promotes mitotic spindle assembly. This chain is Carboxy-terminal kinesin 2, found in Xenopus laevis (African clawed frog).